The following is a 449-amino-acid chain: mRNA-capping enzyme subunit alpha (449 aa).

Lys66 (N6-GMP-lysine intermediate) is an active-site residue. The segment at 405–449 is disordered; that stretch reads DERKNGAYQHHSSSFSESRQQPKAEPVAEKKQTEPKYVDDDDWSD. The segment covering 414-423 has biased composition (polar residues); the sequence is HHSSSFSESR. Residues 424–442 show a composition bias toward basic and acidic residues; the sequence is QQPKAEPVAEKKQTEPKYV.

This sequence belongs to the eukaryotic GTase family. Heterodimer. The mRNA-capping enzyme is composed of two separate chains alpha and beta, respectively a mRNA guanylyltransferase and an mRNA 5'-triphosphate monophosphatase.

The protein localises to the nucleus. The catalysed reaction is a 5'-end diphospho-ribonucleoside in mRNA + GTP + H(+) = a 5'-end (5'-triphosphoguanosine)-ribonucleoside in mRNA + diphosphate. Functionally, second step of mRNA capping. Transfer of the GMP moiety of GTP to the 5'-end of RNA via an enzyme-GMP covalent reaction intermediate. The chain is mRNA-capping enzyme subunit alpha (CEG1) from Candida glabrata (strain ATCC 2001 / BCRC 20586 / JCM 3761 / NBRC 0622 / NRRL Y-65 / CBS 138) (Yeast).